The sequence spans 984 residues: MQEHLVVTLDGKDYLVEPGTNLLEFIKSQDTFVPSICYNESMGPIQTCDTCTVEIDGKIERSCSTVIDRPMTVNTVNNDVKDAQKEALDRILEKHMLYCTVCDYNNGDCEIHNTMDAWGLQHQTYEYKEKPYEKDYGPFYRYDPNQCILCGRCVEACQDIEVNETIRIDWDREHPRVIWDNDVPINESSCVSCGQCATVCPCNAMMEVNMEGNAGYMTDTEPGSLAAMVDLTKKAEPGYGPLFAISDSEAEMRKERIKKTKTVCTYCGVGCSFEVWTKDREILKVQPSHDSPANKIATCVKGKFSWGHINSDQRLTKPLVRKNGEFHEVEWDEALNVIADNFTSIKEKYGPDALSFISSSKATNEESYLMQKLARQVIGTNNVDNCSRYCQAPATKGLFRTVGHGGDSGSIEDLEKAAMSVLIGTNTAEAHPVIASRMKRAQKLFGQKIHVFDIRKHEMAERADRFYQPKPGTDLAWLSAVTKYIIDHDLHDKAFIEEWVEDFDEYYKSLETFTMAFAEEATGIPEAELIKFAEECAKAESVVICWAMGITQQDIGSDSSTAISNLLLVTGNYRRPSTGAYPLRGHNNVQGCSDMGSMPDKITGYQSIEADDIRAKFEKEYGVKLNPKVGKDNHEMVEGVHDGEIHSLYLYGEDTGIVDSNINFVQAAFENLDFMVVQDEFLTFTATFADVVLPASPSLEKDGTFTNTERRIQRLYQALKPLGESKPDWKIFQAIANKLGFDWNYKHPSEIMDEIARLTPLYAGVSYERLEGFNSLQWPVHPDGTDEPILYLEGFNFDNGKAKLFPLSFDNYFKQDEVYDIHVNNGRLLEHFHEGNMTYQTPMIKYKVPRAFVEISPELAEDRGIHEGAEVKLISETGEAVLQVHVTDRVKGKEIYIPLNNDAMENGDLGAINLLTNSDVDQYTDTPSYKRTSCRLEVIAKRGKSPLNPNNFRVNKKRHPQYSVQVQKKWERPDYVFPGNQVDK.

Positions 3–79 constitute a 2Fe-2S ferredoxin-type domain; that stretch reads EHLVVTLDGK…PMTVNTVNND (77 aa). 4 residues coordinate [2Fe-2S] cluster: Cys37, Cys48, Cys51, and Cys63. Residues 79–119 enclose the 4Fe-4S His(Cys)3-ligated-type domain; it reads DVKDAQKEALDRILEKHMLYCTVCDYNNGDCEIHNTMDAWG. [4Fe-4S] cluster is bound by residues His95, Cys99, Cys102, Cys109, Cys147, Cys150, Cys153, Cys157, Cys190, Cys193, Cys196, Cys200, Cys264, Cys267, Cys271, and Cys299. 4Fe-4S ferredoxin-type domains follow at residues 138 to 165 and 181 to 211; these read PFYRYDPNQCILCGRCVEACQDIEVNET and NDVPINESSCVSCGQCATVCPCNAMMEVNME. Residues 252–984 are formate dehydrogenase; it reads MRKERIKKTK…YVFPGNQVDK (733 aa). Residues 257–313 enclose the 4Fe-4S Mo/W bis-MGD-type domain; it reads IKKTKTVCTYCGVGCSFEVWTKDREILKVQPSHDSPANKIATCVKGKFSWGHINSDQ.

In the C-terminal section; belongs to the prokaryotic molybdopterin-containing oxidoreductase family. [2Fe-2S] cluster serves as cofactor. The cofactor is [4Fe-4S] cluster. It depends on Mo-bis(molybdopterin guanine dinucleotide) as a cofactor.

It carries out the reaction formate + NAD(+) = CO2 + NADH. This chain is Putative formate dehydrogenase SAB2186c, found in Staphylococcus aureus (strain bovine RF122 / ET3-1).